Consider the following 101-residue polypeptide: MLSLAHFLVLGAILFAISIVGIFLNRKNVIVLLMAIELMLLAVNINFVAFSHYLGDLAGQVFVFFILTVAAAESAIGLAILVVLFRNLDTINVDDLDTLKG.

Helical transmembrane passes span 4-24 (LAHFLVLGAILFAISIVGIFL), 30-50 (IVLLMAIELMLLAVNINFVAF), and 61-81 (VFVFFILTVAAAESAIGLAIL).

It belongs to the complex I subunit 4L family. As to quaternary structure, NDH-1 is composed of 14 different subunits. Subunits NuoA, H, J, K, L, M, N constitute the membrane sector of the complex.

It localises to the cell inner membrane. It carries out the reaction a quinone + NADH + 5 H(+)(in) = a quinol + NAD(+) + 4 H(+)(out). Functionally, NDH-1 shuttles electrons from NADH, via FMN and iron-sulfur (Fe-S) centers, to quinones in the respiratory chain. The immediate electron acceptor for the enzyme in this species is believed to be ubiquinone. Couples the redox reaction to proton translocation (for every two electrons transferred, four hydrogen ions are translocated across the cytoplasmic membrane), and thus conserves the redox energy in a proton gradient. The protein is NADH-quinone oxidoreductase subunit K of Cupriavidus taiwanensis (strain DSM 17343 / BCRC 17206 / CCUG 44338 / CIP 107171 / LMG 19424 / R1) (Ralstonia taiwanensis (strain LMG 19424)).